The following is a 569-amino-acid chain: MALLAAATLNPTTHLSLRSRAGRNSENLWLRSAASSQKSKGRFCNLTIRAGTPSKPAEPIGPVFTKLKPWQIPKRDWFDKDFLFGASTSAYQIEGAWNEDGKGPSTWDHFCHTYPERISDRTNGDVAANSYHLYEEDVKALKDMGMKVYRFSIAWSRILPDGTGKVNQAGIDYYNKLINSLIDNDIVPYVTIWHWDTPQALEDKYGGFLNRKIVDDYKQFAEVCFKNFGDRVKNWFTFNEPHTYCCFSYGEGIHAPGRCSPGMDCAVPKGDSLREPYTAGHHILLAHAEAVELFKACYNKHGDSKIGMAFDVMGYEPFQDSFLDDQARERSIDYNLGWFLEPVVRGDYPFSMRSLIGDRLPKFTKEEQEKLASSCDIMGLNYYTSRFSKHIDISSDFTPKLNTDDAYASSETKGSDGNDIGPITGTYWIYMYPKGLTDLLLIMKEKYGNPPIFITENGIADVDSDPTMTDPLDDWKRLDYLQRHISAVKDAIDQGADVRGHFTWGLIDNFEWSLGYSSRFGLVYIDKKDGNKRKLKKSAKWFAKFNSVPKRLLKTTNNNATVTVTSVSV.

Residues 1 to 50 constitute a chloroplast transit peptide; it reads MALLAAATLNPTTHLSLRSRAGRNSENLWLRSAASSQKSKGRFCNLTIRA. Residues Gln92, His194, and 239–240 contribute to the a beta-D-glucoside site; that span reads NE. Glu240 functions as the Proton donor in the catalytic mechanism. Residues Cys259 and Cys265 are joined by a disulfide bond. A beta-D-glucoside contacts are provided by residues Tyr383, Glu456, Trp504, 511-512, and Phe520; that span reads EW. Glu456 serves as the catalytic Nucleophile.

The protein belongs to the glycosyl hydrolase 1 family. Homo- and heterohexamers. In terms of tissue distribution, expressed in young seedlings early after germination.

It localises to the plastid. Its subcellular location is the chloroplast. The enzyme catalyses Hydrolysis of terminal, non-reducing beta-D-glucosyl residues with release of beta-D-glucose.. It carries out the reaction DIMBOA beta-D-glucoside + H2O = DIMBOA + D-glucose. The catalysed reaction is DIBOA beta-D-glucoside + H2O = DIBOA + D-glucose. In terms of biological role, acts in defense of young plant parts against pests via the production of hydroxamic acids from hydroxamic acid glucosides. Enzymatic activity is highly correlated with plant growth. The preferred substrate is DIMBOA-beta-D-glucoside. The chain is 4-hydroxy-7-methoxy-3-oxo-3,4-dihydro-2H-1,4-benzoxazin-2-yl glucoside beta-D-glucosidase 1a, chloroplastic (GLU1A) from Triticum aestivum (Wheat).